The chain runs to 261 residues: tRNA pseudouridine synthase A (261 aa).

Aspartate 52 serves as the catalytic Nucleophile. Tyrosine 111 contributes to the substrate binding site.

Belongs to the tRNA pseudouridine synthase TruA family. As to quaternary structure, homodimer.

It carries out the reaction uridine(38/39/40) in tRNA = pseudouridine(38/39/40) in tRNA. Functionally, formation of pseudouridine at positions 38, 39 and 40 in the anticodon stem and loop of transfer RNAs. The protein is tRNA pseudouridine synthase A of Jannaschia sp. (strain CCS1).